The chain runs to 64 residues: Bubble protein (64 aa).

4 disulfides stabilise this stretch: Cys-3-Cys-30, Cys-18-Cys-38, Cys-28-Cys-54, and Cys-49-Cys-64.

It is found in the secreted. In terms of biological role, may act as a toxin. May recognize a molecule or part of a molecule with a negatively charged surface potential. This Penicillium brevicompactum protein is Bubble protein.